The sequence spans 213 residues: Dimethylamine corrinoid protein 3 (213 aa).

The region spanning 1 to 91 (MADIEGLLHE…DLPAGAEKKL (91 aa)) is the B12-binding N-terminal domain. One can recognise a B12-binding domain in the interval 92 to 213 (GVIVNGTVEG…AVAKAKELLL (122 aa)). H104 is a methylcob(III)alamin binding site.

The protein belongs to the methylamine corrinoid protein family.

It functions in the pathway one-carbon metabolism; methanogenesis from dimethylamine. In terms of biological role, acts as a methyl group carrier between MtbB and MtbA. The sequence is that of Dimethylamine corrinoid protein 3 (mtbC3) from Methanosarcina acetivorans (strain ATCC 35395 / DSM 2834 / JCM 12185 / C2A).